We begin with the raw amino-acid sequence, 122 residues long: Ribonuclease P protein component (122 aa).

This sequence belongs to the RnpA family. In terms of assembly, consists of a catalytic RNA component (M1 or rnpB) and a protein subunit.

It carries out the reaction Endonucleolytic cleavage of RNA, removing 5'-extranucleotides from tRNA precursor.. In terms of biological role, RNaseP catalyzes the removal of the 5'-leader sequence from pre-tRNA to produce the mature 5'-terminus. It can also cleave other RNA substrates such as 4.5S RNA. The protein component plays an auxiliary but essential role in vivo by binding to the 5'-leader sequence and broadening the substrate specificity of the ribozyme. This chain is Ribonuclease P protein component, found in Lactobacillus helveticus (strain DPC 4571).